A 420-amino-acid polypeptide reads, in one-letter code: Serine hydroxymethyltransferase (420 aa).

Residues leucine 121 and glycine 125 to leucine 127 contribute to the (6S)-5,6,7,8-tetrahydrofolate site. Position 230 is an N6-(pyridoxal phosphate)lysine (lysine 230). (6S)-5,6,7,8-tetrahydrofolate-binding positions include glutamate 246 and serine 354–phenylalanine 356.

Belongs to the SHMT family. As to quaternary structure, homodimer. Pyridoxal 5'-phosphate is required as a cofactor.

The protein resides in the cytoplasm. It carries out the reaction (6R)-5,10-methylene-5,6,7,8-tetrahydrofolate + glycine + H2O = (6S)-5,6,7,8-tetrahydrofolate + L-serine. It participates in one-carbon metabolism; tetrahydrofolate interconversion. It functions in the pathway amino-acid biosynthesis; glycine biosynthesis; glycine from L-serine: step 1/1. Catalyzes the reversible interconversion of serine and glycine with tetrahydrofolate (THF) serving as the one-carbon carrier. This reaction serves as the major source of one-carbon groups required for the biosynthesis of purines, thymidylate, methionine, and other important biomolecules. Also exhibits THF-independent aldolase activity toward beta-hydroxyamino acids, producing glycine and aldehydes, via a retro-aldol mechanism. This Rickettsia peacockii (strain Rustic) protein is Serine hydroxymethyltransferase.